Consider the following 137-residue polypeptide: Type 3 secretion system pilotin (137 aa).

A signal peptide spans 1–14; sequence MLLPLALLLGGCVS.

Belongs to the ExsB/YscW family.

The protein resides in the cell outer membrane. Involved in the synthesis of the type III secretion system (T3SS), also called injectisome, which is used to inject bacterial effector proteins into eukaryotic host cells. Pilot protein that is required for the proper localization of the secretin PscC in the outer membrane. Necessary for full in vivo virulence. The polypeptide is Type 3 secretion system pilotin (Pseudomonas aeruginosa (strain ATCC 15692 / DSM 22644 / CIP 104116 / JCM 14847 / LMG 12228 / 1C / PRS 101 / PAO1)).